Consider the following 1217-residue polypeptide: ATP-dependent helicase/nuclease subunit A (1217 aa).

Positions 10 to 475 (VIWTDAQWQS…IDLSQNFRSR (466 aa)) constitute a UvrD-like helicase ATP-binding domain. Residue 31-38 (AAAGSGKT) participates in ATP binding. In terms of domain architecture, UvrD-like helicase C-terminal spans 476–786 (KEVLSTTNYI…RMMTIHSSKG (311 aa)).

This sequence belongs to the helicase family. AddA subfamily. Heterodimer of AddA and AddB/RexB. Requires Mg(2+) as cofactor.

The enzyme catalyses Couples ATP hydrolysis with the unwinding of duplex DNA by translocating in the 3'-5' direction.. The catalysed reaction is ATP + H2O = ADP + phosphate + H(+). Functionally, the heterodimer acts as both an ATP-dependent DNA helicase and an ATP-dependent, dual-direction single-stranded exonuclease. Recognizes the chi site generating a DNA molecule suitable for the initiation of homologous recombination. The AddA nuclease domain is required for chi fragment generation; this subunit has the helicase and 3' -&gt; 5' nuclease activities. In Staphylococcus aureus (strain MSSA476), this protein is ATP-dependent helicase/nuclease subunit A.